The sequence spans 322 residues: Phosphatidylserine decarboxylase proenzyme (322 aa).

Residues aspartate 90, histidine 147, and serine 254 each act as charge relay system; for autoendoproteolytic cleavage activity in the active site. The Schiff-base intermediate with substrate; via pyruvic acid; for decarboxylase activity role is filled by serine 254. At serine 254 the chain carries Pyruvic acid (Ser); by autocatalysis. Positions 293–322 (PDAEPAPLPAEEIEAEHDASPLVDDKKDQV) are disordered. Basic and acidic residues predominate over residues 308-322 (EHDASPLVDDKKDQV).

The protein belongs to the phosphatidylserine decarboxylase family. PSD-B subfamily. Prokaryotic type I sub-subfamily. Heterodimer of a large membrane-associated beta subunit and a small pyruvoyl-containing alpha subunit. Pyruvate serves as cofactor. Is synthesized initially as an inactive proenzyme. Formation of the active enzyme involves a self-maturation process in which the active site pyruvoyl group is generated from an internal serine residue via an autocatalytic post-translational modification. Two non-identical subunits are generated from the proenzyme in this reaction, and the pyruvate is formed at the N-terminus of the alpha chain, which is derived from the carboxyl end of the proenzyme. The autoendoproteolytic cleavage occurs by a canonical serine protease mechanism, in which the side chain hydroxyl group of the serine supplies its oxygen atom to form the C-terminus of the beta chain, while the remainder of the serine residue undergoes an oxidative deamination to produce ammonia and the pyruvoyl prosthetic group on the alpha chain. During this reaction, the Ser that is part of the protease active site of the proenzyme becomes the pyruvoyl prosthetic group, which constitutes an essential element of the active site of the mature decarboxylase.

It localises to the cell membrane. It carries out the reaction a 1,2-diacyl-sn-glycero-3-phospho-L-serine + H(+) = a 1,2-diacyl-sn-glycero-3-phosphoethanolamine + CO2. It functions in the pathway phospholipid metabolism; phosphatidylethanolamine biosynthesis; phosphatidylethanolamine from CDP-diacylglycerol: step 2/2. Functionally, catalyzes the formation of phosphatidylethanolamine (PtdEtn) from phosphatidylserine (PtdSer). The polypeptide is Phosphatidylserine decarboxylase proenzyme (Escherichia coli O139:H28 (strain E24377A / ETEC)).